Reading from the N-terminus, the 577-residue chain is Arginine--tRNA ligase (577 aa).

A 'HIGH' region motif is present at residues 122–132 (PNVAKEMHVGH).

Belongs to the class-I aminoacyl-tRNA synthetase family. As to quaternary structure, monomer.

It is found in the cytoplasm. It catalyses the reaction tRNA(Arg) + L-arginine + ATP = L-arginyl-tRNA(Arg) + AMP + diphosphate. The protein is Arginine--tRNA ligase of Salmonella enteritidis PT4 (strain P125109).